We begin with the raw amino-acid sequence, 628 residues long: RING finger protein 112 (628 aa).

Residues 57–98 (CSICLERPREPISLDCGHDFCPRCFSTHRVPGCGPPCCPECR) form an RING-type zinc finger. The interaction with ZBTB16 stretch occupies residues 132–628 (AVRAEPLLLV…GDREPLLQEE (497 aa)). In terms of domain architecture, GB1/RHD3-type G spans 167–409 (DTPVCLLAVL…RCPGYWSEGR (243 aa)). 318–319 (RD) is a binding site for GTP. 2 helical membrane passes run 544–564 (LAAV…GVVG) and 577–597 (GMVA…GGGV).

It belongs to the TRAFAC class dynamin-like GTPase superfamily. GB1/RHD3 GTPase family. GB1 subfamily. As to quaternary structure, self-associates. Interacts with SP1 in an oxidative stress-regulated manner. Interacts with SIGMAR1 in an oxidative stress-regulated manner. Interacts with ZBTB16 (via C2H2-type zinc finger domains 1 and 2). In terms of processing, auto-ubiquitinated.

The protein localises to the membrane. Its subcellular location is the cytoplasm. The protein resides in the nucleus. It localises to the nuclear body. It is found in the nucleoplasm. The protein localises to the endosome. Its subcellular location is the cytoplasmic vesicle. The protein resides in the secretory vesicle. It localises to the synaptic vesicle. It is found in the postsynaptic density. The protein localises to the perikaryon. Its subcellular location is the cell projection. The protein resides in the neuron projection. The enzyme catalyses S-ubiquitinyl-[E2 ubiquitin-conjugating enzyme]-L-cysteine + [acceptor protein]-L-lysine = [E2 ubiquitin-conjugating enzyme]-L-cysteine + N(6)-ubiquitinyl-[acceptor protein]-L-lysine.. The protein operates within protein modification; protein ubiquitination. E3 ubiquitin-protein ligase that plays an important role in neuronal differentiation, including neurogenesis and gliogenesis, during brain development. During embryonic development initiates neuronal differentiation by inducing cell cycle arrest at the G0/G1 phase through up-regulation of cell-cycle regulatory proteins. Plays a role not only in the fetal period during the development of the nervous system, but also in the adult brain, where it is involved in the maintenance of neural functions and protection of the nervous tissue cells from oxidative stress-induced damage. Exhibits GTPase and E3 ubiquitin-protein ligase activities. Regulates dendritic spine density and synaptic neurotransmission; its ability to hydrolyze GTP is involved in the maintenance of dendritic spine density. In Bos taurus (Bovine), this protein is RING finger protein 112 (RNF112).